A 135-amino-acid polypeptide reads, in one-letter code: Basic phospholipase A2 6 (135 aa).

Intrachain disulfides connect Cys28-Cys87, Cys42-Cys134, Cys44-Cys60, Cys59-Cys115, Cys66-Cys108, Cys76-Cys101, and Cys94-Cys106. Residues Tyr43, Gly45, and Gly47 each coordinate Ca(2+). Residue His63 is part of the active site. Position 64 (Asp64) interacts with Ca(2+). The active site involves Asp109.

This sequence belongs to the phospholipase A2 family. Group I subfamily. D49 sub-subfamily. The cofactor is Ca(2+). Expressed by the venom gland.

The protein localises to the secreted. The catalysed reaction is a 1,2-diacyl-sn-glycero-3-phosphocholine + H2O = a 1-acyl-sn-glycero-3-phosphocholine + a fatty acid + H(+). In terms of biological role, snake venom phospholipase A2 (PLA2) that inhibits neuromuscular transmission by blocking acetylcholine release from the nerve termini. PLA2 catalyzes the calcium-dependent hydrolysis of the 2-acyl groups in 3-sn-phosphoglycerides. Very weakly suppress the acetylcholine (ACh)-evoked current mediated by alpha-7-similar nAChRs in L.stagnalis neurons. In Bungarus fasciatus (Banded krait), this protein is Basic phospholipase A2 6.